The sequence spans 162 residues: Endoribonuclease YbeY (162 aa).

The Zn(2+) site is built by histidine 128, histidine 132, and histidine 138.

The protein belongs to the endoribonuclease YbeY family. Zn(2+) serves as cofactor.

Its subcellular location is the cytoplasm. Functionally, single strand-specific metallo-endoribonuclease involved in late-stage 70S ribosome quality control and in maturation of the 3' terminus of the 16S rRNA. This chain is Endoribonuclease YbeY, found in Levilactobacillus brevis (strain ATCC 367 / BCRC 12310 / CIP 105137 / JCM 1170 / LMG 11437 / NCIMB 947 / NCTC 947) (Lactobacillus brevis).